Here is a 716-residue protein sequence, read N- to C-terminus: Polyribonucleotide nucleotidyltransferase (716 aa).

Asp-485 and Asp-491 together coordinate Mg(2+). The region spanning 552–611 is the KH domain; it reads PRFTTIKIDQDKIKDVIGKGGAVIRELTESTNTNIEIGDDGTIKVAASDQADADAAIEKI. Positions 621–689 constitute an S1 motif domain; that stretch reads GKIYQGKVAR…RQGRVRLSMK (69 aa). Residues 689–698 are compositionally biased toward basic and acidic residues; that stretch reads KEAAEKKEEP. The disordered stretch occupies residues 689 to 716; sequence KEAAEKKEEPAPEAPAEPAAEEENKSEE. Positions 707–716 are enriched in acidic residues; it reads AAEEENKSEE.

It belongs to the polyribonucleotide nucleotidyltransferase family. In terms of assembly, component of the RNA degradosome, which is a multiprotein complex involved in RNA processing and mRNA degradation. It depends on Mg(2+) as a cofactor.

It is found in the cytoplasm. The catalysed reaction is RNA(n+1) + phosphate = RNA(n) + a ribonucleoside 5'-diphosphate. Involved in mRNA degradation. Catalyzes the phosphorolysis of single-stranded polyribonucleotides processively in the 3'- to 5'-direction. The polypeptide is Polyribonucleotide nucleotidyltransferase (Idiomarina loihiensis (strain ATCC BAA-735 / DSM 15497 / L2-TR)).